Here is a 151-residue protein sequence, read N- to C-terminus: UPF0735 ACT domain-containing protein SAUSA300_1599 (151 aa).

An ACT domain is found at 74–149; that stretch reads TLILYVTDIV…YVSKVELISM (76 aa).

It belongs to the UPF0735 family.

The sequence is that of UPF0735 ACT domain-containing protein SAUSA300_1599 from Staphylococcus aureus (strain USA300).